We begin with the raw amino-acid sequence, 237 residues long: RNA polymerase sigma-28 factor (237 aa).

A propeptide spanning residues 1-19 (MSLFAAIGYMVREVFVFVS) is cleaved from the precursor. Positions 77–90 (DLISIGTIGLIKAI) match the Polymerase core binding motif. The segment at residues 197 to 206 (QREIAKALGI) is a DNA-binding region (H-T-H motif).

It belongs to the sigma-70 factor family. In terms of processing, proteolytically cleaved in the N-terminus probably by a SpoIIGA homolog to yield the active peptide.

Its function is as follows. Sigma factors are initiation factors that promote the attachment of RNA polymerase to specific initiation sites and are then released. This sigma factor directs the transcription of crystal protein genes, a sporulation-regulated event. In Bacillus thuringiensis subsp. kurstaki, this protein is RNA polymerase sigma-28 factor (sigK).